Reading from the N-terminus, the 314-residue chain is uncharacterized protein (314 aa).

2 consecutive transmembrane segments (helical) span residues 23-43 (LALG…MALF) and 98-118 (MASG…GPLT). Residues 165-184 (GLGSGAGGGDVGGGGAGGTT) show a composition bias toward gly residues. A disordered region spans residues 165–314 (GLGSGAGGGD…APDEKTDAGE (150 aa)). Residues 190–202 (GPPPVPTSSPPTT) are compositionally biased toward pro residues. Composition is skewed to low complexity over residues 203 to 212 (PAGAPTKSAT) and 219 to 232 (ASPA…AGMP). A helical transmembrane segment spans residues 221–241 (PASAHMGAAGMPMVPPGAMGA). Basic and acidic residues predominate over residues 294–314 (LLPEHKDFGRIAPDEKTDAGE).

Its subcellular location is the cell membrane. This is an uncharacterized protein from Mycobacterium tuberculosis (strain CDC 1551 / Oshkosh).